The primary structure comprises 380 residues: Enoyl-[acyl-carrier-protein] reductase, mitochondrial (380 aa).

The transit peptide at 1-9 (MLPTFKRYM) directs the protein to the mitochondrion. The Proton donor role is filled by Y73. Residues N157, 185-188 (TSSV), 208-210 (RDR), 283-286 (YGGM), and 308-310 (YWV) contribute to the NADP(+) site. S339 bears the Phosphoserine mark. K373 contacts NADP(+).

It belongs to the zinc-containing alcohol dehydrogenase family. Quinone oxidoreductase subfamily. As to quaternary structure, homodimer or in a complex with other proteins. Interacts with ARS1.

Its subcellular location is the mitochondrion matrix. The enzyme catalyses a 2,3-saturated acyl-[ACP] + NADP(+) = a (2E)-enoyl-[ACP] + NADPH + H(+). It carries out the reaction (2E,4E)-hexadienoyl-CoA + NADPH + H(+) = (4E)-hexenoyl-CoA + NADP(+). It catalyses the reaction (2E)-hexenoyl-CoA + NADPH + H(+) = hexanoyl-CoA + NADP(+). In terms of biological role, catalyzes the NADPH-dependent reduction of trans-2-enoyl thioesters in mitochondrial fatty acid synthesis (fatty acid synthesis type II). Fatty acid chain elongation in mitochondria uses acyl carrier protein (ACP) as an acyl group carrier, but the enzyme accepts both ACP and CoA thioesters as substrates in vitro. Required for respiration and the maintenance of the mitochondrial compartment. This chain is Enoyl-[acyl-carrier-protein] reductase, mitochondrial (ETR1), found in Saccharomyces cerevisiae (strain ATCC 204508 / S288c) (Baker's yeast).